The sequence spans 737 residues: Pentatricopeptide repeat-containing protein At3g49740 (737 aa).

PPR repeat units follow at residues 20–55 (TLLNLNRRLTGLTRSGENRNALKLFADVHRCTTLRP), 56–90 (DQYSVSLAITTARHLRDTIFGGQVHCYAIRSGLLC), 91–121 (HSHVSNTLLSLYERLGNLASLKKKFDEIDEP), 122–152 (DVYSWTTLLSASFKLGDIEYAFEVFDKMPER), 154–188 (DVAIWNAMITGCKESGYHETSVELFREMHKLGVRH), 189–222 (DKFGFATILSMCDYGSLDFGKQVHSLVIKAGFFI), 223–253 (ASSVVNALITMYFNCQVVVDACLVFEETDVA), 256–289 (DQVTFNVVIDGLAGFKRDESLLVFRKMLEASLRP), 290–321 (TDLTFVSVMGSCSCAAMGHQVHGLAIKTGYEK), 322–352 (YTLVSNATMTMYSSFEDFGAAHKVFESLEEK), 353–387 (DLVTWNTMISSYNQAKLGKSAMSVYKRMHIIGVKP), 388–418 (DEFTFGSLLATSLDLDVLEMVQACIIKFGLS), 420–454 (KIEISNALISAYSKNGQIEKADLLFERSLRKNLIS), 455–485 (WNAIISGFYHNGFPFEGLERFSCLLESEVRI), 488–522 (DAYTLSTLLSICVSTSSLMLGSQTHAYVLRHGQFK), 523–553 (ETLIGNALINMYSQCGTIQNSLEVFNQMSEK), 554–588 (DVVSWNSLISAYSRHGEGENAVNTYKTMQDEGKVI), 590–620 (DAATFSAVLSACSHAGLVEEGLEIFNSMVEF), and 626–656 (NVDHFSCLVDLLGRAGHLDEAESLVKISEKT). The interval 663 to 737 (VWWALFSACA…KQRGCSWMRL (75 aa)) is type E motif; degenerate.

This sequence belongs to the PPR family. PCMP-E subfamily.

In Arabidopsis thaliana (Mouse-ear cress), this protein is Pentatricopeptide repeat-containing protein At3g49740 (PCMP-E84).